The following is a 689-amino-acid chain: Glycine--tRNA ligase beta subunit (689 aa).

The protein belongs to the class-II aminoacyl-tRNA synthetase family. In terms of assembly, tetramer of two alpha and two beta subunits.

It is found in the cytoplasm. The enzyme catalyses tRNA(Gly) + glycine + ATP = glycyl-tRNA(Gly) + AMP + diphosphate. The chain is Glycine--tRNA ligase beta subunit from Shewanella amazonensis (strain ATCC BAA-1098 / SB2B).